The sequence spans 400 residues: Large envelope protein (400 aa).

The residue at position 1 (M1) is an N-acetylmethionine. Disordered regions lie at residues M1–A55 and L85–Q118. The N-myristoyl glycine; by host moiety is linked to residue G2. Positions G2–A119 are pre-S1. A pre-S region spans residues G2–N174. Residues G2–G181 lie on the Virion surface; in external conformation side of the membrane. Topologically, residues G2–R253 are intravirion; in internal conformation. The N-linked (GlcNAc...) asparagine glycan is linked to W4. The segment covering S96–T106 has biased composition (polar residues). Residues M120–N174 are pre-S2. Residues F182 to I202 form a helical membrane-spanning segment. Residues P203–R253 are Intravirion; in external conformation-facing. A helical transmembrane segment spans residues F254 to F274. Over Q275 to S348 the chain is Virion surface. N-linked (GlcNAc...) asparagine; by host glycosylation occurs at N320. Residues L349–I369 traverse the membrane as a helical segment. Over W370 to W375 the chain is Intravirion. A helical transmembrane segment spans residues G376–V398. At Y399 to I400 the chain is on the virion surface side.

The protein belongs to the orthohepadnavirus major surface antigen family. As to quaternary structure, in its internal form (Li-HBsAg), interacts with the capsid protein and with the isoform S. Interacts with host chaperone CANX. In terms of assembly, associates with host chaperone CANX through its pre-S2 N glycan; this association may be essential for isoform M proper secretion. Interacts with isoform L. Interacts with the antigens of satellite virus HDV (HDVAgs); this interaction is required for encapsidation of HDV genomic RNA. Isoform M is N-terminally acetylated by host at a ratio of 90%, and N-glycosylated by host at the pre-S2 region. Post-translationally, myristoylated.

Its subcellular location is the virion membrane. Its function is as follows. The large envelope protein exists in two topological conformations, one which is termed 'external' or Le-HBsAg and the other 'internal' or Li-HBsAg. In its external conformation the protein attaches the virus to cell receptors and thereby initiating infection. This interaction determines the species specificity and liver tropism. This attachment induces virion internalization predominantly through caveolin-mediated endocytosis. The large envelope protein also assures fusion between virion membrane and endosomal membrane. In its internal conformation the protein plays a role in virion morphogenesis and mediates the contact with the nucleocapsid like a matrix protein. The middle envelope protein plays an important role in the budding of the virion. It is involved in the induction of budding in a nucleocapsid independent way. In this process the majority of envelope proteins bud to form subviral lipoprotein particles of 22 nm of diameter that do not contain a nucleocapsid. The polypeptide is Large envelope protein (Hepatitis B virus genotype C subtype ar (isolate Japan/S-207/1988) (HBV-C)).